We begin with the raw amino-acid sequence, 443 residues long: Cobyrinate a,c-diamide synthase (443 aa).

The 192-residue stretch at 244-435 (KVSVAMDSAF…AHIHFLSNPR (192 aa)) folds into the GATase cobBQ-type domain. Cys327 acts as the Nucleophile in catalysis.

It belongs to the CobB/CbiA family. Mg(2+) is required as a cofactor.

It catalyses the reaction cob(II)yrinate + 2 L-glutamine + 2 ATP + 2 H2O = cob(II)yrinate a,c diamide + 2 L-glutamate + 2 ADP + 2 phosphate + 2 H(+). It participates in cofactor biosynthesis; adenosylcobalamin biosynthesis; cob(II)yrinate a,c-diamide from sirohydrochlorin (anaerobic route): step 10/10. In terms of biological role, catalyzes the ATP-dependent amidation of the two carboxylate groups at positions a and c of cobyrinate, using either L-glutamine or ammonia as the nitrogen source. The polypeptide is Cobyrinate a,c-diamide synthase (Thermoplasma acidophilum (strain ATCC 25905 / DSM 1728 / JCM 9062 / NBRC 15155 / AMRC-C165)).